The sequence spans 40 residues: Photosystem II reaction center protein J (40 aa).

Residues 8-28 (IPLWLIGTVTGIPVIGLVGVF) traverse the membrane as a helical segment.

This sequence belongs to the PsbJ family. PSII is composed of 1 copy each of membrane proteins PsbA, PsbB, PsbC, PsbD, PsbE, PsbF, PsbH, PsbI, PsbJ, PsbK, PsbL, PsbM, PsbT, PsbX, PsbY, PsbZ, Psb30/Ycf12, at least 3 peripheral proteins of the oxygen-evolving complex and a large number of cofactors. It forms dimeric complexes.

It is found in the plastid. The protein resides in the chloroplast thylakoid membrane. Its function is as follows. One of the components of the core complex of photosystem II (PSII). PSII is a light-driven water:plastoquinone oxidoreductase that uses light energy to abstract electrons from H(2)O, generating O(2) and a proton gradient subsequently used for ATP formation. It consists of a core antenna complex that captures photons, and an electron transfer chain that converts photonic excitation into a charge separation. In Lolium perenne (Perennial ryegrass), this protein is Photosystem II reaction center protein J.